We begin with the raw amino-acid sequence, 326 residues long: Probable UDP-3-O-acyl-N-acetylglucosamine deacetylase 2, mitochondrial (326 aa).

The transit peptide at Met-1 to Tyr-21 directs the protein to the mitochondrion. 3 residues coordinate Zn(2+): His-109, His-281, and Asp-285.

The protein belongs to the LpxC family. Zn(2+) serves as cofactor.

Its subcellular location is the mitochondrion. The enzyme catalyses a UDP-3-O-[(3R)-3-hydroxyacyl]-N-acetyl-alpha-D-glucosamine + H2O = a UDP-3-O-[(3R)-3-hydroxyacyl]-alpha-D-glucosamine + acetate. It participates in glycolipid biosynthesis; lipid IV(A) biosynthesis; lipid IV(A) from (3R)-3-hydroxytetradecanoyl-[acyl-carrier-protein] and UDP-N-acetyl-alpha-D-glucosamine: step 2/6. In terms of biological role, involved in the biosynthesis of lipid A, a phosphorylated glycolipid that in bacteria anchors the lipopolysaccharide to the outer membrane of the cell. Lipid A-like molecules in plants may serve as structural components of the outer membranes of mitochondria and/or chloroplasts, or may be involved in signal transduction or plant defense responses (Potential). The chain is Probable UDP-3-O-acyl-N-acetylglucosamine deacetylase 2, mitochondrial (LPXC2) from Arabidopsis thaliana (Mouse-ear cress).